Here is a 290-residue protein sequence, read N- to C-terminus: UDP-N-acetylenolpyruvoylglucosamine reductase (290 aa).

The FAD-binding PCMH-type domain maps to 20–187; the sequence is GVGGESEMWF…SRVRLKLRPS (168 aa). Residue R167 is part of the active site.

This sequence belongs to the MurB family. FAD serves as cofactor.

It is found in the cytoplasm. The catalysed reaction is UDP-N-acetyl-alpha-D-muramate + NADP(+) = UDP-N-acetyl-3-O-(1-carboxyvinyl)-alpha-D-glucosamine + NADPH + H(+). It participates in cell wall biogenesis; peptidoglycan biosynthesis. Functionally, cell wall formation. This Deinococcus radiodurans (strain ATCC 13939 / DSM 20539 / JCM 16871 / CCUG 27074 / LMG 4051 / NBRC 15346 / NCIMB 9279 / VKM B-1422 / R1) protein is UDP-N-acetylenolpyruvoylglucosamine reductase.